The chain runs to 1561 residues: Synemin (1561 aa).

Residues M1–S10 form a head region. Residues E11 to R49 form a coil 1A region. Positions E11–N320 are interaction with DMD and UTRN. The region spanning E11–E322 is the IF rod domain. Residues E50 to A58 are linker 1. Positions L59 to T163 are coil 1B. The tract at residues M164–S186 is linker 12. The tract at residues Y187–V300 is coil 2. A tail region spans residues K301–F1561. Composition is skewed to polar residues over residues S371–V390 and S401–S421. Disordered regions lie at residues S371–S421, D549–K574, and E591–T637. Over residues G601 to T624 the composition is skewed to basic and acidic residues. A compositionally biased stretch (polar residues) spans Q625–T637. The residue at position 653 (T653) is a Phosphothreonine. Phosphoserine is present on residues S655, S778, S780, S1044, S1049, S1077, S1087, S1179, and S1182. 2 disordered regions span residues S1033–G1061 and S1075–V1099. Residues V1086–V1099 are compositionally biased toward polar residues. The tract at residues V1152–Q1453 is interaction with TLN1 and VCL. The segment at A1212–E1231 is disordered. Residues G1222–E1231 show a composition bias toward basic and acidic residues. Positions A1242 to G1557 are interaction with DMD and UTRN. S1425 carries the phosphoserine modification. R1481 bears the Omega-N-methylarginine mark. The segment at D1491–G1519 is disordered.

It belongs to the intermediate filament family. As to quaternary structure, interacts with DES, DMD, DTNA, TLN1, UTRN and VCL. Isoform 1 and isoform 2 interact with GFAP and VIM. In terms of tissue distribution, isoform 2 and isoform 3 are detected in adult skeletal muscle, heart and bladder, whereas isoform 1 is only detected in adult bladder (at protein level).

It is found in the cytoplasm. Its subcellular location is the cytoskeleton. The protein resides in the cell junction. The protein localises to the adherens junction. Its function is as follows. Type-VI intermediate filament (IF) which plays an important cytoskeletal role within the muscle cell cytoskeleton. It forms heteromeric IFs with desmin and/or vimentin, and via its interaction with cytoskeletal proteins alpha-dystrobrevin, dystrophin, talin-1, utrophin and vinculin, is able to link these heteromeric IFs to adherens-type junctions, such as to the costameres, neuromuscular junctions, and myotendinous junctions within striated muscle cells. This Mus musculus (Mouse) protein is Synemin.